We begin with the raw amino-acid sequence, 465 residues long: ATP synthase subunit beta (465 aa).

152-159 (GGAGVGKT) contributes to the ATP binding site.

Belongs to the ATPase alpha/beta chains family. In terms of assembly, F-type ATPases have 2 components, CF(1) - the catalytic core - and CF(0) - the membrane proton channel. CF(1) has five subunits: alpha(3), beta(3), gamma(1), delta(1), epsilon(1). CF(0) has three main subunits: a(1), b(2) and c(9-12). The alpha and beta chains form an alternating ring which encloses part of the gamma chain. CF(1) is attached to CF(0) by a central stalk formed by the gamma and epsilon chains, while a peripheral stalk is formed by the delta and b chains.

It localises to the cell inner membrane. It catalyses the reaction ATP + H2O + 4 H(+)(in) = ADP + phosphate + 5 H(+)(out). Its function is as follows. Produces ATP from ADP in the presence of a proton gradient across the membrane. The catalytic sites are hosted primarily by the beta subunits. This Campylobacter jejuni subsp. jejuni serotype O:6 (strain 81116 / NCTC 11828) protein is ATP synthase subunit beta.